The chain runs to 213 residues: Peroxynitrite isomerase (213 aa).

Over residues 1–10 the composition is skewed to low complexity; the sequence is MGADATGDTA. Residues 1-26 form a disordered region; that stretch reads MGADATGDTAARGDRAAHGDTASGGA. The GXWXGXG signature appears at 51 to 57; that stretch reads GTWRGEG. Position 203 (histidine 203) interacts with heme b.

Belongs to the nitrobindin family. Homodimer. The cofactor is heme b.

The enzyme catalyses peroxynitrite = nitrate. It functions in the pathway nitrogen metabolism. Its function is as follows. Heme-binding protein able to scavenge peroxynitrite and to protect free L-tyrosine against peroxynitrite-mediated nitration, by acting as a peroxynitrite isomerase that converts peroxynitrite to nitrate. Therefore, this protein likely plays a role in peroxynitrite sensing and in the detoxification of reactive nitrogen and oxygen species (RNS and ROS, respectively). Is able to bind nitric oxide (NO) in vitro, but may act as a sensor of peroxynitrite levels in vivo. The protein is Peroxynitrite isomerase of Parafrankia sp. (strain EAN1pec).